The sequence spans 333 residues: Serine/threonine-protein phosphatase 4 catalytic subunit 1 (333 aa).

Residues 1–29 (MALAVADTQNETFARSESPTSGPSDQLST) are disordered. Residues 7–27 (DTQNETFARSESPTSGPSDQL) show a composition bias toward polar residues. Aspartate 79, histidine 81, aspartate 107, and asparagine 139 together coordinate Mn(2+). The Proton donor role is filled by histidine 140. Residues histidine 189 and histidine 264 each coordinate Mn(2+). At leucine 333 the chain carries Leucine methyl ester.

Belongs to the PPP phosphatase family. PP-4 (PP-X) subfamily. Serine/threonine-protein phosphatase 4 (PP4) occurs in different assemblies of the catalytic and one or more regulatory subunits. The regulatory subunits are likely to be ppfr-1, ppfr-2, ppfr-4 and smk-1. Interacts with mei-1. Mn(2+) is required as a cofactor. Post-translationally, methylation at the C-terminal Leu-333 is critical for interactions with regulatory subunits.

It is found in the cytoplasm. The protein resides in the cytoskeleton. Its subcellular location is the microtubule organizing center. It localises to the centrosome. The enzyme catalyses O-phospho-L-seryl-[protein] + H2O = L-seryl-[protein] + phosphate. The catalysed reaction is O-phospho-L-threonyl-[protein] + H2O = L-threonyl-[protein] + phosphate. In terms of biological role, protein phosphatase which plays an essential role in meiosis and in early embryonic mitosis. During spermatocyte meiosis and the first embryonic mitosis, regulates centrosome maturation, and thus spindle formation, by recruiting some of the components of the pericentriolar material (PCM). During oocyte meiosis I, regulates meiotic chromosome dynamics including synapsis-independent chromosome pairing, restriction of synapsis to homologous chromosomes, programmed DNA double-strand break initiation and crossover formation resulting in chiasma formation. During oocyte meiosis II and probably together with regulatory subunit ppfr-1, may regulate microtubule severing by dephosphorylating and activating mei-1, a component of the katanin microtubule severing complex. This Caenorhabditis briggsae protein is Serine/threonine-protein phosphatase 4 catalytic subunit 1 (pph-4.1).